The chain runs to 164 residues: Thiol peroxidase (164 aa).

A Thioredoxin domain is found at 18–163; the sequence is VKTGETAPEF…FESALEAYRN (146 aa). The active-site Cysteine sulfenic acid (-SOH) intermediate is cysteine 60. Cysteine 60 and cysteine 93 are joined by a disulfide.

The protein belongs to the peroxiredoxin family. Tpx subfamily. Homodimer.

It catalyses the reaction a hydroperoxide + [thioredoxin]-dithiol = an alcohol + [thioredoxin]-disulfide + H2O. Thiol-specific peroxidase that catalyzes the reduction of hydrogen peroxide and organic hydroperoxides to water and alcohols, respectively. Plays a role in cell protection against oxidative stress by detoxifying peroxides. The chain is Thiol peroxidase from Staphylococcus saprophyticus subsp. saprophyticus (strain ATCC 15305 / DSM 20229 / NCIMB 8711 / NCTC 7292 / S-41).